The following is an 811-amino-acid chain: Exocyst complex component 6B (811 aa).

Positions 50-119 form a coiled coil; sequence MEKLETRIRN…LVIAMEELKQ (70 aa). The tract at residues 260 to 280 is disordered; the sequence is STSPKSEQDSGILDVEDEEDD.

It belongs to the SEC15 family. As to quaternary structure, the exocyst complex is composed of SEC3, SEC5, SEC6, SEC8, SEC10, SEC15, EXO70 and EXO84.

Its function is as follows. Component of the exocyst complex involved in the docking of exocytic vesicles with fusion sites on the plasma membrane. The chain is Exocyst complex component 6B (EXOC6B) from Homo sapiens (Human).